The chain runs to 171 residues: NADH-quinone oxidoreductase subunit I 1 (171 aa).

4Fe-4S ferredoxin-type domains lie at 39-71 (IVLT…LTKA) and 81-110 (EHFR…LTPD). [4Fe-4S] cluster contacts are provided by cysteine 51, cysteine 54, cysteine 57, cysteine 61, cysteine 90, cysteine 93, cysteine 96, and cysteine 100.

Belongs to the complex I 23 kDa subunit family. NDH-1 is composed of 14 different subunits. Subunits NuoA, H, J, K, L, M, N constitute the membrane sector of the complex. The cofactor is [4Fe-4S] cluster.

It localises to the cell inner membrane. It catalyses the reaction a quinone + NADH + 5 H(+)(in) = a quinol + NAD(+) + 4 H(+)(out). In terms of biological role, NDH-1 shuttles electrons from NADH, via FMN and iron-sulfur (Fe-S) centers, to quinones in the respiratory chain. The immediate electron acceptor for the enzyme in this species is believed to be ubiquinone. Couples the redox reaction to proton translocation (for every two electrons transferred, four hydrogen ions are translocated across the cytoplasmic membrane), and thus conserves the redox energy in a proton gradient. This chain is NADH-quinone oxidoreductase subunit I 1, found in Rhodopseudomonas palustris (strain BisB5).